A 350-amino-acid chain; its full sequence is Induced myeloid leukemia cell differentiation protein Mcl-1 homolog (350 aa).

Residue lysine 5 forms a Glycyl lysine isopeptide (Lys-Gly) (interchain with G-Cter in ubiquitin) linkage. The tract at residues 23–95 (AGSGGASSSG…GPNVSATPPR (73 aa)) is disordered. Low complexity predominate over residues 31–41 (SGGRLLASGRE). Residues 50–61 (GGEAGAVIGGSA) show a composition bias toward gly residues. The interval 104 to 175 (RASPPEEMEG…PAEEEEDELY (72 aa)) is PEST-like. Serine 121 is modified (phosphoserine). Lysine 136 participates in a covalent cross-link: Glycyl lysine isopeptide (Lys-Gly) (interchain with G-Cter in ubiquitin). A disordered region spans residues 150–169 (ASSGPGMDGSLPSTPPPAEE). Serine 159 bears the Phosphoserine; by GSK3-alpha and GSK3-beta mark. Position 162 is a phosphoserine (serine 162). The residue at position 163 (threonine 163) is a Phosphothreonine. Glycyl lysine isopeptide (Lys-Gly) (interchain with G-Cter in ubiquitin) cross-links involve residues lysine 194 and lysine 197. A BH3 motif is present at residues 209-223 (ALETLQRVGDGVQRN). Residues 252-272 (HVFSDGVTNWGRIVTLISFGA) carry the BH1 motif. Positions 304-319 (DWLVKQRGWDGFVEFF) match the BH2 motif. The helical transmembrane segment at 327–349 (GIRNVLLAFAGVAGVGAGLAYLI) threads the bilayer.

Belongs to the Bcl-2 family. In terms of assembly, interacts with HIF3A (via C-terminus domain). Interacts with BOK, BIK, BAX, BAK1, and TPT1. Interacts with unphosphorylated BAD. Interacts with BMF, BBC3 and PMAIP1. Interacts with BOP. Interacts with BCL2L11; may sequester BCL2L11 to prevent its pro-apoptotic activity. Interacts with GIMAP5 and HSPA8/HSC70; the interaction between HSPA8 and MCL1 is impaired in the absence of GIMAP5. Post-translationally, cleaved by CASP3 during apoptosis, yielding a pro-apoptotic C-terminal fragment. In terms of processing, rapidly degraded in the absence of phosphorylation in the PEST region. Phosphorylated on Ser-159, by GSK3, in response to IL3/interleukin-3 withdrawal. Phosphorylation at Ser-159 induces ubiquitination and proteasomal degradation, abrogating the anti-apoptotic activity. Treatment with taxol or okadaic acid induces phosphorylation on additional sites. Post-translationally, ubiquitinated. Ubiquitination is induced by phosphorylation at Ser-159. Deubiquitinated by USP20; leading to increased stability. As to expression, detected in peripheral blood mononuclear cells and bone marrow.

The protein resides in the membrane. The protein localises to the cytoplasm. It is found in the mitochondrion. It localises to the nucleus. Its subcellular location is the nucleoplasm. Involved in the regulation of apoptosis versus cell survival, and in the maintenance of viability but not of proliferation. Mediates its effects by interactions with a number of other regulators of apoptosis. The chain is Induced myeloid leukemia cell differentiation protein Mcl-1 homolog (MCL1) from Canis lupus familiaris (Dog).